The following is a 110-amino-acid chain: MSSKAKLEEIPITVDFSGGLEMLFDNQRRHSISLPAKDTEGKPVTIAFLIDYICKKLMKDPRTDLFVLDNHIRPGILVLINDADWELEGEEAYEIQPNDNILFVSTLHGG.

At glycine 110 the chain carries 1-thioglycine. Residue glycine 110 forms a Glycyl lysine isopeptide (Gly-Lys) (interchain with K-? in acceptor proteins) linkage.

This sequence belongs to the URM1 family. Homodimer; homodimerization may provide an autoprotection to the highly active C-terminal residue before attacking its substrates. Forms a conjugate with the target protein AHP1. C-terminal thiocarboxylation occurs in 2 steps, it is first acyl-adenylated (-COAMP) via the hesA/moeB/thiF part of UBA4, then thiocarboxylated (-COSH) via the rhodanese domain of UBA4.

It localises to the cytoplasm. Its pathway is tRNA modification; 5-methoxycarbonylmethyl-2-thiouridine-tRNA biosynthesis. Functionally, acts as a sulfur carrier required for 2-thiolation of mcm(5)S(2)U at tRNA wobble positions of cytosolic tRNA(Lys), tRNA(Glu) and tRNA(Gln). Serves as sulfur donor in tRNA 2-thiolation reaction by being thiocarboxylated (-COSH) at its C-terminus by the MOCS3 homolog UBA4. The sulfur is then transferred to tRNA to form 2-thiolation of mcm(5)S(2)U. Prior mcm(5) tRNA modification by the elongator complex is required for 2-thiolation. Also acts as a ubiquitin-like protein (UBL) that is covalently conjugated via an isopeptide bond to lysine residues of target proteins such as AHP1. Conjugation does not depend on the canonical cascade of E2 ubiquitin-conjugating enzymes and/or E3 ligases. The conjugation reaction requires a thiocarboxylated C-terminus of URM1 and a peroxidatic cysteine in the target protein, as the sulfur atom of the URM1 thiocarboxyl group is transferred to redox-active cysteine residues in the target protein. Oxidative stress specifically induces the formation of UBL-protein conjugates. Covalent modification with URM1 promotes the phase separation of a wide range of proteins into condensates like stress granules. This Chaetomium thermophilum (strain DSM 1495 / CBS 144.50 / IMI 039719) (Thermochaetoides thermophila) protein is Ubiquitin-related modifier 1.